The primary structure comprises 243 residues: Ribosomal RNA small subunit methyltransferase G (243 aa).

S-adenosyl-L-methionine is bound by residues Gly82, Phe87, 133 to 134 (AE), and Arg152.

Belongs to the methyltransferase superfamily. RNA methyltransferase RsmG family.

Its subcellular location is the cytoplasm. Functionally, specifically methylates the N7 position of a guanine in 16S rRNA. This Clostridium novyi (strain NT) protein is Ribosomal RNA small subunit methyltransferase G.